The chain runs to 684 residues: Phenoloxidase 2 (684 aa).

Positions 1 to 51 (MSNTAVLNDLVALYDRPTEPMFRVKAKKSFKVPKEYVTDRFKNVAVEISNR) are cleaved as a propeptide — removed by PPAF1. Asparagine 81 and asparagine 91 each carry an N-linked (GlcNAc...) asparagine glycan. Residues histidine 209, histidine 213, and histidine 238 each coordinate Cu cation. N-linked (GlcNAc...) asparagine glycosylation occurs at asparagine 330. Glutamate 350 acts as the Proton acceptor in catalysis. Cu cation contacts are provided by histidine 365, histidine 369, and histidine 405. N-linked (GlcNAc...) asparagine glycosylation is found at asparagine 416, asparagine 487, asparagine 491, and asparagine 546. Cystine bridges form between cysteine 581/cysteine 623 and cysteine 583/cysteine 630.

This sequence belongs to the tyrosinase family. In terms of assembly, dimer. Might form a homodimer or a heterodimer with PPO1. Might interact with PPAF2 (via CLIP domain); the interaction might be required for PPO2 activity. Requires Cu(2+) as cofactor. Precursor cleaved by PPAF1. In terms of tissue distribution, hemocytes.

The protein resides in the secreted. Functionally, this is a copper-containing oxidase that functions in the formation of pigments such as melanins and other polyphenolic compounds. Catalyzes the oxidation of o-diphenols (N-acetyldopamine, 4-methylcatechol and dopamine). Cannot oxidize monophenols and p-phenols (L-tyrosine, tyramine, gentisic acid and hydroquinone). Binds to the surface of hemocytes and is involved in hemocyte melanization. Activation of the enzyme in response to bacterial lipopolysaccharides (LPS) suggests it may play a role in innate immunity. The protein is Phenoloxidase 2 of Holotrichia diomphalia (Korean black chafer).